The sequence spans 380 residues: Succinyl-diaminopimelate desuccinylase (380 aa).

His70 lines the Zn(2+) pocket. Asp72 is an active-site residue. Zn(2+) is bound at residue Asp104. The active-site Proton acceptor is Glu138. Residues Glu139, Glu167, and His353 each coordinate Zn(2+).

It belongs to the peptidase M20A family. DapE subfamily. In terms of assembly, homodimer. Zn(2+) is required as a cofactor. The cofactor is Co(2+).

It catalyses the reaction N-succinyl-(2S,6S)-2,6-diaminopimelate + H2O = (2S,6S)-2,6-diaminopimelate + succinate. It participates in amino-acid biosynthesis; L-lysine biosynthesis via DAP pathway; LL-2,6-diaminopimelate from (S)-tetrahydrodipicolinate (succinylase route): step 3/3. Catalyzes the hydrolysis of N-succinyl-L,L-diaminopimelic acid (SDAP), forming succinate and LL-2,6-diaminopimelate (DAP), an intermediate involved in the bacterial biosynthesis of lysine and meso-diaminopimelic acid, an essential component of bacterial cell walls. In Ectopseudomonas mendocina (strain ymp) (Pseudomonas mendocina), this protein is Succinyl-diaminopimelate desuccinylase.